The chain runs to 128 residues: Infection structure-specific protein 56 (128 aa).

Composition is skewed to polar residues over residues 27–36 and 87–101; these read HATYPQSQPH and TSIS…DSQS. Disordered regions lie at residues 27–48 and 86–128; these read HATY…AVPS and GTSI…STSA. Residues 115–128 are compositionally biased toward basic and acidic residues; it reads KDAKKELKDPSTSA.

Functionally, general role in the development of germlings including formation of the infection structures. This chain is Infection structure-specific protein 56 (INF56), found in Uromyces appendiculatus (Rust fungus).